A 345-amino-acid polypeptide reads, in one-letter code: Phenylalanine--tRNA ligase alpha subunit (345 aa).

Glutamate 255 provides a ligand contact to Mg(2+).

The protein belongs to the class-II aminoacyl-tRNA synthetase family. Phe-tRNA synthetase alpha subunit type 1 subfamily. As to quaternary structure, tetramer of two alpha and two beta subunits. The cofactor is Mg(2+).

It is found in the cytoplasm. It carries out the reaction tRNA(Phe) + L-phenylalanine + ATP = L-phenylalanyl-tRNA(Phe) + AMP + diphosphate + H(+). This Lysinibacillus sphaericus (strain C3-41) protein is Phenylalanine--tRNA ligase alpha subunit.